We begin with the raw amino-acid sequence, 139 residues long: Actin-depolymerizing factor (139 aa).

The ADF-H domain occupies 5-139 (SSGMAVDDEC…SMDIIKARAF (135 aa)).

The protein belongs to the actin-binding proteins ADF family. In terms of tissue distribution, preferentially in mature anther.

Actin-depolymerizing protein. Severs actin filaments (F-actin) and binds to actin monomers. This is Actin-depolymerizing factor from Lilium longiflorum (Trumpet lily).